A 115-amino-acid polypeptide reads, in one-letter code: MKFVLLFGVLLVTLFSYSSAEMLDDFDQADEDELLSLIEKEEARAKECTPRFYDCSHDRHSCCRSELFKDVCTCFYPEGGDNEVCTCQQPKHLKYMEKAAGKAKKFGGKIKKWFG.

The N-terminal stretch at 1 to 20 (MKFVLLFGVLLVTLFSYSSA) is a signal peptide. Positions 21 to 44 (EMLDDFDQADEDELLSLIEKEEAR) are excised as a propeptide. 4 cysteine pairs are disulfide-bonded: Cys48-Cys63, Cys55-Cys72, Cys62-Cys87, and Cys74-Cys85.

It belongs to the neurotoxin 19 (CSTX) family. 01 subfamily. Expressed by the venom gland.

The protein resides in the secreted. The sequence is that of U3-lycotoxin-Ls1k from Lycosa singoriensis (Wolf spider).